The chain runs to 221 residues: Small ribosomal subunit protein uS5 (221 aa).

The region spanning 46–109 is the S5 DRBM domain; that stretch reads LKDEVIDIKR…INAKLNIMEI (64 aa).

The protein belongs to the universal ribosomal protein uS5 family. Part of the 30S ribosomal subunit. Contacts protein S4.

Functionally, with S4 and S12 plays an important role in translational accuracy. The sequence is that of Small ribosomal subunit protein uS5 from Thermoplasma acidophilum (strain ATCC 25905 / DSM 1728 / JCM 9062 / NBRC 15155 / AMRC-C165).